Here is a 944-residue protein sequence, read N- to C-terminus: E3 ubiquitin-protein ligase HACE1 (944 aa).

7 ANK repeats span residues 23-55, 64-93, 97-126, 130-159, 163-192, 196-226, and 228-253; these read LPED…NSKF, VKRS…DPNY, SGCT…DVNI, EGLT…NVDV, MGQT…DINR, SGAT…YLPD, and NGVT…QHHP. The 336-residue stretch at 609–944 folds into the HECT domain; that stretch reads NCEKLKQGIA…HCGSYGYTMA (336 aa). C911 acts as the Glycyl thioester intermediate in catalysis.

The protein resides in the golgi apparatus. It localises to the golgi stack membrane. The protein localises to the cytoplasm. Its subcellular location is the endoplasmic reticulum. It catalyses the reaction S-ubiquitinyl-[E2 ubiquitin-conjugating enzyme]-L-cysteine + [acceptor protein]-L-lysine = [E2 ubiquitin-conjugating enzyme]-L-cysteine + N(6)-ubiquitinyl-[acceptor protein]-L-lysine.. The protein operates within protein modification; protein ubiquitination. In terms of biological role, E3 ubiquitin-protein ligase involved in Golgi membrane fusion and regulation of small GTPases. Acts as a regulator of Golgi membrane dynamics during the cell cycle: recruited to Golgi membrane by Rab proteins and regulates postmitotic Golgi membrane fusion. Acts by mediating ubiquitination during mitotic Golgi disassembly, ubiquitination serving as a signal for Golgi reassembly later, after cell division. This Xenopus laevis (African clawed frog) protein is E3 ubiquitin-protein ligase HACE1 (hace1).